Here is a 62-residue protein sequence, read N- to C-terminus: Photosystem II reaction center protein Z (62 aa).

The next 2 membrane-spanning stretches (helical) occupy residues V8 to A28 and Y41 to V61.

It belongs to the PsbZ family. As to quaternary structure, PSII is composed of 1 copy each of membrane proteins PsbA, PsbB, PsbC, PsbD, PsbE, PsbF, PsbH, PsbI, PsbJ, PsbK, PsbL, PsbM, PsbT, PsbX, PsbY, PsbZ, Psb30/Ycf12, peripheral proteins PsbO, CyanoQ (PsbQ), PsbU, PsbV and a large number of cofactors. It forms dimeric complexes.

It localises to the cellular thylakoid membrane. Functionally, may control the interaction of photosystem II (PSII) cores with the light-harvesting antenna, regulates electron flow through the 2 photosystem reaction centers. PSII is a light-driven water plastoquinone oxidoreductase, using light energy to abstract electrons from H(2)O, generating a proton gradient subsequently used for ATP formation. The sequence is that of Photosystem II reaction center protein Z from Crocosphaera subtropica (strain ATCC 51142 / BH68) (Cyanothece sp. (strain ATCC 51142)).